Consider the following 764-residue polypeptide: 5-methyltetrahydropteroyltriglutamate--homocysteine methyltransferase (764 aa).

5-methyltetrahydropteroyltri-L-glutamate is bound by residues Arg-16–Lys-19 and Lys-117. Residues Ile-442–Ser-444 and Glu-495 each bind L-homocysteine. L-methionine is bound by residues Ile-442–Ser-444 and Glu-495. 5-methyltetrahydropteroyltri-L-glutamate contacts are provided by residues Arg-526–Cys-527 and Trp-572. L-homocysteine is bound at residue Asp-610. Asp-610 lines the L-methionine pocket. Position 616 (Glu-616) interacts with 5-methyltetrahydropteroyltri-L-glutamate. His-652, Cys-654, and Glu-676 together coordinate Zn(2+). His-705 acts as the Proton donor in catalysis. Cys-737 serves as a coordination point for Zn(2+).

Belongs to the vitamin-B12 independent methionine synthase family. Zn(2+) is required as a cofactor.

It carries out the reaction 5-methyltetrahydropteroyltri-L-glutamate + L-homocysteine = tetrahydropteroyltri-L-glutamate + L-methionine. It functions in the pathway amino-acid biosynthesis; L-methionine biosynthesis via de novo pathway; L-methionine from L-homocysteine (MetE route): step 1/1. In terms of biological role, catalyzes the transfer of a methyl group from 5-methyltetrahydrofolate to homocysteine resulting in methionine formation. In Bordetella pertussis (strain Tohama I / ATCC BAA-589 / NCTC 13251), this protein is 5-methyltetrahydropteroyltriglutamate--homocysteine methyltransferase.